Consider the following 249-residue polypeptide: 5'-nucleotidase SurE (249 aa).

Residues aspartate 8, aspartate 9, serine 39, and asparagine 91 each contribute to the a divalent metal cation site.

Belongs to the SurE nucleotidase family. Requires a divalent metal cation as cofactor.

It is found in the cytoplasm. The catalysed reaction is a ribonucleoside 5'-phosphate + H2O = a ribonucleoside + phosphate. In terms of biological role, nucleotidase that shows phosphatase activity on nucleoside 5'-monophosphates. The protein is 5'-nucleotidase SurE of Pseudomonas entomophila (strain L48).